The following is an 889-amino-acid chain: Cytoplasmic aconitate hydratase (889 aa).

Residues glutamine 86 and 205-207 (DSH) contribute to the substrate site. Residues cysteine 437, cysteine 503, and cysteine 506 each contribute to the [4Fe-4S] cluster site. Residues arginine 536, arginine 541, arginine 699, and 779–780 (SR) each bind substrate.

Belongs to the aconitase/IPM isomerase family. Interacts (when associated with the 4Fe-4S) with FBXL5. Interacts with frataxin(81-210). [4Fe-4S] cluster is required as a cofactor.

The protein resides in the cytoplasm. It is found in the cytosol. It catalyses the reaction citrate = D-threo-isocitrate. Its function is as follows. Bifunctional iron sensor that switches between 2 activities depending on iron availability. Iron deprivation, promotes its mRNA binding activity through which it regulates the expression of genes involved in iron uptake, sequestration and utilization. Binds to iron-responsive elements (IRES) in the untranslated region of target mRNAs preventing for instance the translation of ferritin and aminolevulinic acid synthase and stabilizing the transferrin receptor mRNA. Conversely, when cellular iron levels are high, binds a 4Fe-4S cluster which precludes RNA binding activity and promotes the aconitase activity, the isomerization of citrate to isocitrate via cis-aconitate. This Oryctolagus cuniculus (Rabbit) protein is Cytoplasmic aconitate hydratase (ACO1).